The sequence spans 156 residues: Small ribosomal subunit protein uS7 (156 aa).

Belongs to the universal ribosomal protein uS7 family. Part of the 30S ribosomal subunit. Contacts proteins S9 and S11.

Functionally, one of the primary rRNA binding proteins, it binds directly to 16S rRNA where it nucleates assembly of the head domain of the 30S subunit. Is located at the subunit interface close to the decoding center, probably blocks exit of the E-site tRNA. In Bifidobacterium longum (strain NCC 2705), this protein is Small ribosomal subunit protein uS7.